The sequence spans 406 residues: Ribonuclease D (406 aa).

Positions 26-193 constitute a 3'-5' exonuclease domain; it reads LITQTTDLEI…VYLLLKKQLE (168 aa). One can recognise an HRDC domain in the interval 231–312; that stretch reads KPRELAVLQK…HEGLEVDLAT (82 aa).

It belongs to the RNase D family. A divalent metal cation serves as cofactor.

It localises to the cytoplasm. The enzyme catalyses Exonucleolytic cleavage that removes extra residues from the 3'-terminus of tRNA to produce 5'-mononucleotides.. Functionally, exonuclease involved in the 3' processing of various precursor tRNAs. Initiates hydrolysis at the 3'-terminus of an RNA molecule and releases 5'-mononucleotides. The chain is Ribonuclease D from Bartonella henselae (strain ATCC 49882 / DSM 28221 / CCUG 30454 / Houston 1) (Rochalimaea henselae).